The chain runs to 487 residues: F-box/LRR-repeat protein At1g48400 (487 aa).

The F-box domain maps to 9–57; sequence RDSISNLPDEILGKILSLLPTKVAASTSVLSKRWRNLLGLVDNLCFDES. 6 LRR repeats span residues 71 to 97, 125 to 153, 174 to 199, 225 to 251, 327 to 358, and 359 to 384; these read SLRF…SLSR, HLHA…TLSA, SILG…YMRD, THNP…DYSS, TLHL…SIES, and NKDK…VIKG.

The chain is F-box/LRR-repeat protein At1g48400 from Arabidopsis thaliana (Mouse-ear cress).